The following is a 970-amino-acid chain: Sodium/calcium exchanger 1 (970 aa).

Residues 1–32 (MLRLRLSPTFSVGFHLLAFVPLLFSHVDLISA) form the signal peptide. Topologically, residues 33 to 71 (DTEMEGEGNETGECTGSYYCKKGVILPIWEPQDPSFGDK) are extracellular. Residue Asn-41 is glycosylated (N-linked (GlcNAc...) asparagine). The helical transmembrane segment at 72 to 92 (IARATVYFVAMVYMFLGVSII) threads the bilayer. At 93-133 (ADRFMSSIEVITSQEKEITIKKPNGETTKTTVRIWNETVSN) the chain is on the cytoplasmic side. A helical transmembrane segment spans residues 134–154 (LTLMALGSSAPEILLSVIEVC). Residues 138–178 (ALGSSAPEILLSVIEVCGHNFTAGDLGPSTIVGSAAFNMFI) form an Alpha-1 repeat. The Extracellular portion of the chain corresponds to 155-167 (GHNFTAGDLGPST). Residue Asn-157 is glycosylated (N-linked (GlcNAc...) asparagine). A helical transmembrane segment spans residues 168 to 188 (IVGSAAFNMFIIIALCVYVVP). Topologically, residues 189-201 (DGETRKIKHLRVF) are cytoplasmic. The helical transmembrane segment at 202–222 (FVTAAWSIFAYTWLYIILSVI) threads the bilayer. The Extracellular portion of the chain corresponds to 223-228 (SPGVVE). The helical transmembrane segment at 229-249 (VWEGLLTFFFFPICVVFAWVA) threads the bilayer. The Cytoplasmic segment spans residues 250 to 797 (DRRLLFYKYV…FVPPTEYWNG (548 aa)). The tract at residues 251–270 (RRLLFYKYVYKRYRAGKQRG) is putative calmodulin-binding region. 2 positions are modified to phosphoserine: Ser-282 and Ser-389. Calx-beta domains follow at residues 393-493 (VNTE…VHLS) and 524-624 (ATVT…LEIG). Positions 417, 453, 478, 479, 481, 483, 486, 530, 531, 532, 548, 584, 610, 611, 612, and 715 each coordinate Ca(2+). Residues 798–818 (WACFIVSILMIGILTAFIGDL) traverse the membrane as a helical segment. Residues 819–821 (ASH) are Extracellular-facing. A helical transmembrane segment spans residues 822–842 (FGCTIGLKDSVTAVVFVALGT). The stretch at 839 to 875 (ALGTSVPDTFASKVAATQDQYADASIGNVTGSNAVNV) is one Alpha-2 repeat. Topologically, residues 843–871 (SVPDTFASKVAATQDQYADASIGNVTGSN) are cytoplasmic. A helical transmembrane segment spans residues 872-892 (AVNVFLGIGVAWSIAAIYHAA). Residues 893–903 (NGEQFKVSPGT) are Extracellular-facing. A helical transmembrane segment spans residues 904–924 (LAFSVTLFTIFAFINVGVLLY). Topologically, residues 925 to 941 (RRRPEIGGELGGPRTAK) are cytoplasmic. Residues 942–962 (LLTSCLFVLLWLLYIFFSSLE) traverse the membrane as a helical segment. Residues 963–970 (AYCHIKGF) are Extracellular-facing.

It belongs to the Ca(2+):cation antiporter (CaCA) (TC 2.A.19) family. SLC8 subfamily. Detected in heart (at protein level). Detected in heart.

It localises to the cell membrane. It catalyses the reaction Ca(2+)(in) + 3 Na(+)(out) = Ca(2+)(out) + 3 Na(+)(in). Activated by micromolar levels of Ca(2+). Its function is as follows. Mediates the exchange of one Ca(2+) ion against three to four Na(+) ions across the cell membrane, and thereby contributes to the regulation of cytoplasmic Ca(2+) levels and Ca(2+)-dependent cellular processes. Contributes to Ca(2+) transport during excitation-contraction coupling in muscle. In a first phase, voltage-gated channels mediate the rapid increase of cytoplasmic Ca(2+) levels due to release of Ca(2+) stores from the endoplasmic reticulum. SLC8A1 mediates the export of Ca(2+) from the cell during the next phase, so that cytoplasmic Ca(2+) levels rapidly return to baseline. Required for normal embryonic heart development and the onset of heart contractions. This Felis catus (Cat) protein is Sodium/calcium exchanger 1 (SLC8A1).